A 68-amino-acid polypeptide reads, in one-letter code: DNA-directed RNA polymerase subunit omega (68 aa).

The protein belongs to the RNA polymerase subunit omega family. As to quaternary structure, the RNAP catalytic core consists of 2 alpha, 1 beta, 1 beta' and 1 omega subunit. When a sigma factor is associated with the core the holoenzyme is formed, which can initiate transcription.

It catalyses the reaction RNA(n) + a ribonucleoside 5'-triphosphate = RNA(n+1) + diphosphate. Promotes RNA polymerase assembly. Latches the N- and C-terminal regions of the beta' subunit thereby facilitating its interaction with the beta and alpha subunits. The polypeptide is DNA-directed RNA polymerase subunit omega (Syntrophotalea carbinolica (strain DSM 2380 / NBRC 103641 / GraBd1) (Pelobacter carbinolicus)).